The sequence spans 194 residues: Imidazoleglycerol-phosphate dehydratase (194 aa).

This sequence belongs to the imidazoleglycerol-phosphate dehydratase family.

Its subcellular location is the cytoplasm. The enzyme catalyses D-erythro-1-(imidazol-4-yl)glycerol 3-phosphate = 3-(imidazol-4-yl)-2-oxopropyl phosphate + H2O. It participates in amino-acid biosynthesis; L-histidine biosynthesis; L-histidine from 5-phospho-alpha-D-ribose 1-diphosphate: step 6/9. In Chlorobaculum tepidum (strain ATCC 49652 / DSM 12025 / NBRC 103806 / TLS) (Chlorobium tepidum), this protein is Imidazoleglycerol-phosphate dehydratase.